The primary structure comprises 62 residues: Photosystem II reaction center protein Z (62 aa).

2 consecutive transmembrane segments (helical) span residues 8 to 28 (LVVALIVYSFVLIVAVPITLS) and 41 to 61 (VTASIGWVGMVLLTGVLNSFV).

This sequence belongs to the PsbZ family. PSII is composed of 1 copy each of membrane proteins PsbA, PsbB, PsbC, PsbD, PsbE, PsbF, PsbH, PsbI, PsbJ, PsbK, PsbL, PsbM, PsbT, PsbX, PsbY, PsbZ, Psb30/Ycf12, at least 3 peripheral proteins of the oxygen-evolving complex and a large number of cofactors. It forms dimeric complexes.

It is found in the plastid. It localises to the chloroplast thylakoid membrane. May control the interaction of photosystem II (PSII) cores with the light-harvesting antenna, regulates electron flow through the 2 photosystem reaction centers. PSII is a light-driven water plastoquinone oxidoreductase, using light energy to abstract electrons from H(2)O, generating a proton gradient subsequently used for ATP formation. This Cyanidioschyzon merolae (strain NIES-3377 / 10D) (Unicellular red alga) protein is Photosystem II reaction center protein Z.